The chain runs to 148 residues: Large ribosomal subunit protein bL9 (148 aa).

It belongs to the bacterial ribosomal protein bL9 family.

Functionally, binds to the 23S rRNA. This chain is Large ribosomal subunit protein bL9, found in Parabacteroides distasonis (strain ATCC 8503 / DSM 20701 / CIP 104284 / JCM 5825 / NCTC 11152).